A 419-amino-acid chain; its full sequence is Chaperone protein dnaJ 2 (419 aa).

The J domain occupies 14–75 (KFYEILGVPK…EKREIYDQYG (62 aa)). Residues 136–220 (GTTKKLSLSR…CKGEKVVSEK (85 aa)) form a CR-type zinc finger. Residues Cys-149, Cys-152, Cys-165, Cys-168, Cys-192, Cys-195, Cys-208, and Cys-211 each coordinate Zn(2+). CXXCXGXG motif repeat units follow at residues 149–156 (CSKCNGKG), 165–172 (CGGCQGSG), 192–199 (CNDCKGTG), and 208–215 (CPQCKGEK). A compositionally biased stretch (basic and acidic residues) spans 378–391 (TTLHDVNIEDEMKR). Residues 378-419 (TTLHDVNIEDEMKRKAQAQREAYDDDEEDHPGGAQRVQCAQQ) are disordered. A Cysteine methyl ester modification is found at Cys-416. Cys-416 carries the S-farnesyl cysteine lipid modification. Residues 417–419 (AQQ) constitute a propeptide, removed in mature form.

The protein belongs to the DnaJ family. A/I subfamily. Homodimer. The cofactor is Zn(2+). In terms of processing, farnesylated. As to expression, expressed in both etiolated and light-grown tissues.

The protein localises to the membrane. Functionally, plays a continuous role in plant development probably in the structural organization of compartments. The chain is Chaperone protein dnaJ 2 (ATJ2) from Arabidopsis thaliana (Mouse-ear cress).